Here is a 379-residue protein sequence, read N- to C-terminus: Glucose-1-phosphate adenylyltransferase (379 aa).

Alpha-D-glucose 1-phosphate is bound by residues G164, 179 to 180, and S190; that span reads EK.

This sequence belongs to the bacterial/plant glucose-1-phosphate adenylyltransferase family. As to quaternary structure, homotetramer.

It catalyses the reaction alpha-D-glucose 1-phosphate + ATP + H(+) = ADP-alpha-D-glucose + diphosphate. The protein operates within glycan biosynthesis; glycogen biosynthesis. Functionally, involved in the biosynthesis of ADP-glucose, a building block required for the elongation reactions to produce glycogen. Catalyzes the reaction between ATP and alpha-D-glucose 1-phosphate (G1P) to produce pyrophosphate and ADP-Glc. In Streptococcus agalactiae serotype Ia (strain ATCC 27591 / A909 / CDC SS700), this protein is Glucose-1-phosphate adenylyltransferase.